The primary structure comprises 192 residues: ADP-ribosylation factor-like protein 14 (192 aa).

The N-myristoyl glycine moiety is linked to residue G2. Residues 20–27, 64–68, and 124–127 contribute to the GTP site; these read GLDSAGKS, DVGGQ, and NKQD.

This sequence belongs to the small GTPase superfamily. Arf family. In terms of assembly, interacts with ARL14EP.

The protein resides in the cytoplasmic vesicle. In terms of biological role, GTPase that recruits MYO1E to MHC class II-containing vesicles via the effector protein ARL14EP and hence controls the movement of these vesicles along the actin cytoskeleton in dendritic cells. In Mus musculus (Mouse), this protein is ADP-ribosylation factor-like protein 14 (Arl14).